A 317-amino-acid chain; its full sequence is Acetyl-coenzyme A carboxylase carboxyl transferase subunit alpha (317 aa).

In terms of domain architecture, CoA carboxyltransferase C-terminal spans 40–294 (RLQKKSEELT…KARLLTDLED (255 aa)).

It belongs to the AccA family. As to quaternary structure, acetyl-CoA carboxylase is a heterohexamer composed of biotin carboxyl carrier protein (AccB), biotin carboxylase (AccC) and two subunits each of ACCase subunit alpha (AccA) and ACCase subunit beta (AccD).

The protein localises to the cytoplasm. The enzyme catalyses N(6)-carboxybiotinyl-L-lysyl-[protein] + acetyl-CoA = N(6)-biotinyl-L-lysyl-[protein] + malonyl-CoA. It functions in the pathway lipid metabolism; malonyl-CoA biosynthesis; malonyl-CoA from acetyl-CoA: step 1/1. Component of the acetyl coenzyme A carboxylase (ACC) complex. First, biotin carboxylase catalyzes the carboxylation of biotin on its carrier protein (BCCP) and then the CO(2) group is transferred by the carboxyltransferase to acetyl-CoA to form malonyl-CoA. This Actinobacillus succinogenes (strain ATCC 55618 / DSM 22257 / CCUG 43843 / 130Z) protein is Acetyl-coenzyme A carboxylase carboxyl transferase subunit alpha.